The sequence spans 298 residues: Ectoine dioxygenase (298 aa).

Residues 1-18 (MLQQAIDRDPVDRIDRYP) show a composition bias toward basic and acidic residues. The interval 1–26 (MLQQAIDRDPVDRIDRYPTRTAEPAP) is disordered. Gln133 contributes to the L-ectoine binding site. Fe cation-binding residues include His150, Asp152, and His251.

This sequence belongs to the PhyH family. EctD subfamily. As to quaternary structure, homodimer. Fe(2+) is required as a cofactor.

The catalysed reaction is L-ectoine + 2-oxoglutarate + O2 = 5-hydroxyectoine + succinate + CO2. Its function is as follows. Involved in the biosynthesis of 5-hydroxyectoine, called compatible solute, which helps organisms to survive extreme osmotic stress by acting as a highly soluble organic osmolyte. Catalyzes the 2-oxoglutarate-dependent selective hydroxylation of L-ectoine to yield (4S,5S)-5-hydroxyectoine. This is Ectoine dioxygenase from Nocardia farcinica (strain IFM 10152).